Here is a 312-residue protein sequence, read N- to C-terminus: MSDSPSISAEERKRILRERRAAKMAKGNATSRLNTILTQGNSVKDVSSVKSVLDQEPTGATATTTGNHDLDPDHHDIEGFINTPGINASNDSVALSNSEDIDEMFKKIFGGQVPGNGTDGAGSEDPLAQMMKMFSQPGAGTGTNTPFSEDPFSAQPEEFKYQQQLVQYNTYRHQVWKFRFLAVRYFALLANFIYHFYIIGDSISFASSSHQFIRELIPVEPARSFFTLFSTIEVVIIASYYFLGTKEGFFSTATSNNFVVKLLDMGSMVLPQLQQFKTIAVRLLGYYELLAVLLGDLSLVVVLFGLHSVLGN.

Over 1 to 175 (MSDSPSISAE…VQYNTYRHQV (175 aa)) the chain is Cytoplasmic. A helical membrane pass occupies residues 176–196 (WKFRFLAVRYFALLANFIYHF). Topologically, residues 197–224 (YIIGDSISFASSSHQFIRELIPVEPARS) are lumenal. The chain crosses the membrane as a helical span at residues 225-244 (FFTLFSTIEVVIIASYYFLG). Residues 245–288 (TKEGFFSTATSNNFVVKLLDMGSMVLPQLQQFKTIAVRLLGYYE) are Cytoplasmic-facing. A helical transmembrane segment spans residues 289 to 309 (LLAVLLGDLSLVVVLFGLHSV). Topologically, residues 310 to 312 (LGN) are lumenal.

It belongs to the GET2 family. Component of the Golgi to ER traffic (GET) complex, which is composed of GET1, GET2 and GET3. Within the complex, GET1 and GET2 form a heterotetramer which is stabilized by phosphatidylinositol binding and which binds to the GET3 homodimer.

Its subcellular location is the endoplasmic reticulum membrane. It localises to the golgi apparatus membrane. Functionally, required for the post-translational delivery of tail-anchored (TA) proteins to the endoplasmic reticulum. Together with GET1, acts as a membrane receptor for soluble GET3, which recognizes and selectively binds the transmembrane domain of TA proteins in the cytosol. The GET complex cooperates with the HDEL receptor ERD2 to mediate the ATP-dependent retrieval of resident ER proteins that contain a C-terminal H-D-E-L retention signal from the Golgi to the ER. In Scheffersomyces stipitis (strain ATCC 58785 / CBS 6054 / NBRC 10063 / NRRL Y-11545) (Yeast), this protein is Golgi to ER traffic protein 2.